The following is a 143-amino-acid chain: Large-conductance mechanosensitive channel (143 aa).

3 helical membrane passes run 16-36 (VMDLAVGVIIGGAFSGITNSL), 40-60 (IIMPIVAFIAGGELNFKNMFI), and 87-107 (GSFITVLINFLILAFIIFMMV).

The protein belongs to the MscL family. As to quaternary structure, homopentamer.

The protein resides in the cell inner membrane. Functionally, channel that opens in response to stretch forces in the membrane lipid bilayer. May participate in the regulation of osmotic pressure changes within the cell. This is Large-conductance mechanosensitive channel from Psychrobacter sp. (strain PRwf-1).